The chain runs to 245 residues: Eukaryotic translation initiation factor 6 (245 aa).

Tyr-113 bears the Phosphotyrosine mark. At Thr-165 the chain carries Phosphothreonine. Ser-166 bears the Phosphoserine mark. A phosphoserine; by CK1 mark is found at Ser-174 and Ser-175. Ser-235 carries the post-translational modification Phosphoserine; by PKC. 2 positions are modified to phosphoserine: Ser-239 and Ser-243.

It belongs to the eIF-6 family. In terms of assembly, monomer. Associates with the 60S ribosomal subunit. Interacts with RACK1. Interacts with DICER1, AGO2, TARBP2, MOV10 and RPL7A; they form a large RNA-induced silencing complex (RISC). In terms of processing, phosphorylation at Ser-174 and Ser-175 by CSNK1D/CK1 promotes nuclear export. Ufmylated by UFL1.

The protein resides in the cytoplasm. It is found in the nucleus. It localises to the nucleolus. Its function is as follows. Binds to the 60S ribosomal subunit and prevents its association with the 40S ribosomal subunit to form the 80S initiation complex in the cytoplasm. Behaves as a stimulatory translation initiation factor downstream insulin/growth factors. Is also involved in ribosome biogenesis. Associates with pre-60S subunits in the nucleus and is involved in its nuclear export. Cytoplasmic release of TIF6 from 60S subunits and nuclear relocalization is promoted by a RACK1 (RACK1)-dependent protein kinase C activity. In tissues responsive to insulin, controls fatty acid synthesis and glycolysis by exerting translational control of adipogenic transcription factors such as CEBPB, CEBPD and ATF4 that have G/C rich or uORF in their 5'UTR. Required for ROS-dependent megakaryocyte maturation and platelets formation, controls the expression of mitochondrial respiratory chain genes involved in reactive oxygen species (ROS) synthesis. Involved in miRNA-mediated gene silencing by the RNA-induced silencing complex (RISC). Required for both miRNA-mediated translational repression and miRNA-mediated cleavage of complementary mRNAs by RISC. Modulates cell cycle progression and global translation of pre-B cells, its activation seems to be rate-limiting in tumorigenesis and tumor growth. In Bos taurus (Bovine), this protein is Eukaryotic translation initiation factor 6.